The primary structure comprises 360 residues: Phospho-N-acetylmuramoyl-pentapeptide-transferase (360 aa).

10 helical membrane passes run 26–46 (AILG…WVIN), 70–90 (GTPT…TLLW), 97–117 (YVLA…VDDY), 134–154 (YFWQ…TAQI), 167–187 (GVAL…VVGF), 199–219 (GLAI…AYLV), 236–256 (AGEL…FLWF), 263–283 (VFMG…IAVI), 288–308 (IVFI…ILQV), and 338–358 (VIVR…ATLK).

This sequence belongs to the glycosyltransferase 4 family. MraY subfamily. It depends on Mg(2+) as a cofactor.

The protein localises to the cell inner membrane. It catalyses the reaction UDP-N-acetyl-alpha-D-muramoyl-L-alanyl-gamma-D-glutamyl-meso-2,6-diaminopimeloyl-D-alanyl-D-alanine + di-trans,octa-cis-undecaprenyl phosphate = di-trans,octa-cis-undecaprenyl diphospho-N-acetyl-alpha-D-muramoyl-L-alanyl-D-glutamyl-meso-2,6-diaminopimeloyl-D-alanyl-D-alanine + UMP. It functions in the pathway cell wall biogenesis; peptidoglycan biosynthesis. Its function is as follows. Catalyzes the initial step of the lipid cycle reactions in the biosynthesis of the cell wall peptidoglycan: transfers peptidoglycan precursor phospho-MurNAc-pentapeptide from UDP-MurNAc-pentapeptide onto the lipid carrier undecaprenyl phosphate, yielding undecaprenyl-pyrophosphoryl-MurNAc-pentapeptide, known as lipid I. This chain is Phospho-N-acetylmuramoyl-pentapeptide-transferase, found in Saccharophagus degradans (strain 2-40 / ATCC 43961 / DSM 17024).